We begin with the raw amino-acid sequence, 342 residues long: Isopentenyl-diphosphate delta-isomerase (342 aa).

Residue 11 to 12 (RK) coordinates substrate. FMN is bound by residues Ser-68, 69 to 71 (SMT), Ser-99, and Asn-127. Residue 99–101 (SMR) participates in substrate binding. Gln-162 lines the substrate pocket. Glu-163 provides a ligand contact to Mg(2+). FMN-binding positions include Lys-194, Thr-224, 274-276 (GLK), and 295-296 (AG).

This sequence belongs to the IPP isomerase type 2 family. In terms of assembly, homooctamer. Dimer of tetramers. The cofactor is FMN. NADPH is required as a cofactor. Requires Mg(2+) as cofactor.

It localises to the cytoplasm. It carries out the reaction isopentenyl diphosphate = dimethylallyl diphosphate. Involved in the biosynthesis of isoprenoids. Catalyzes the 1,3-allylic rearrangement of the homoallylic substrate isopentenyl (IPP) to its allylic isomer, dimethylallyl diphosphate (DMAPP). This is Isopentenyl-diphosphate delta-isomerase from Rickettsia akari (strain Hartford).